We begin with the raw amino-acid sequence, 147 residues long: 3-dehydroquinate dehydratase (147 aa).

Tyr-23 functions as the Proton acceptor in the catalytic mechanism. Residues Asn-74, His-80, and Asp-87 each coordinate substrate. Catalysis depends on His-100, which acts as the Proton donor. Substrate is bound by residues 101-102 (LS) and Arg-111.

The protein belongs to the type-II 3-dehydroquinase family. Homododecamer.

The enzyme catalyses 3-dehydroquinate = 3-dehydroshikimate + H2O. The protein operates within metabolic intermediate biosynthesis; chorismate biosynthesis; chorismate from D-erythrose 4-phosphate and phosphoenolpyruvate: step 3/7. Its function is as follows. Catalyzes a trans-dehydration via an enolate intermediate. The protein is 3-dehydroquinate dehydratase of Clostridium botulinum (strain Okra / Type B1).